The primary structure comprises 466 residues: Phosphomethylpyrimidine synthase (466 aa).

Residues N80, M109, Y139, H175, 195–197 (SRG), 236–239 (DSLR), and E275 each bind substrate. Residue H279 participates in Zn(2+) binding. Y302 serves as a coordination point for substrate. H343 is a Zn(2+) binding site. C423, C426, and C431 together coordinate [4Fe-4S] cluster.

Belongs to the ThiC family. The cofactor is [4Fe-4S] cluster.

It carries out the reaction 5-amino-1-(5-phospho-beta-D-ribosyl)imidazole + S-adenosyl-L-methionine = 4-amino-2-methyl-5-(phosphooxymethyl)pyrimidine + CO + 5'-deoxyadenosine + formate + L-methionine + 3 H(+). It participates in cofactor biosynthesis; thiamine diphosphate biosynthesis. Catalyzes the synthesis of the hydroxymethylpyrimidine phosphate (HMP-P) moiety of thiamine from aminoimidazole ribotide (AIR) in a radical S-adenosyl-L-methionine (SAM)-dependent reaction. The protein is Phosphomethylpyrimidine synthase of Prochlorococcus marinus (strain NATL1A).